Consider the following 406-residue polypeptide: Phosphopentomutase (406 aa).

The Mn(2+) site is built by Asp-10, Asp-305, His-310, Asp-346, His-347, and His-358.

It belongs to the phosphopentomutase family. Requires Mn(2+) as cofactor.

The protein localises to the cytoplasm. The catalysed reaction is 2-deoxy-alpha-D-ribose 1-phosphate = 2-deoxy-D-ribose 5-phosphate. It carries out the reaction alpha-D-ribose 1-phosphate = D-ribose 5-phosphate. Its pathway is carbohydrate degradation; 2-deoxy-D-ribose 1-phosphate degradation; D-glyceraldehyde 3-phosphate and acetaldehyde from 2-deoxy-alpha-D-ribose 1-phosphate: step 1/2. Its function is as follows. Isomerase that catalyzes the conversion of deoxy-ribose 1-phosphate (dRib-1-P) and ribose 1-phosphate (Rib-1-P) to deoxy-ribose 5-phosphate (dRib-5-P) and ribose 5-phosphate (Rib-5-P), respectively. The chain is Phosphopentomutase from Rhizobium etli (strain ATCC 51251 / DSM 11541 / JCM 21823 / NBRC 15573 / CFN 42).